Consider the following 338-residue polypeptide: MRVLGIETSCDETGIAVYDDKLGLLSHALYSQVKLHADYGGVVPELASRDHVRKIVPLIRQALKNANTDIADIDGIAYTKGPGLIGALLVGACVGRSLAFAWNKPAIGVHHMEGHLLAPMLEEDAPEFPFVALLVSGGHSMLVKVDGIGLYAVLGESVDDAAGEAFDKTAKLMGLDYPGGPRLAKLAAKGEPAGYQFPRPMTDRPGLDFSFSGLKTFTANTIAAEPDDEQTRANIARAFEEAVVDTLAIKCRRALKQTGYNRLVIAGGVSANTRLRETLAEMMTSIGGRVYYPRGEFCTDNGAMIAFAGLQRLKAGQQEDLAVKGQPRWPLDTLPPLA.

Fe cation-binding residues include His-111 and His-115. Residues 134-138, Asp-167, Gly-180, and Asn-272 contribute to the substrate site; that span reads LVSGG. Asp-300 contacts Fe cation.

Belongs to the KAE1 / TsaD family. Fe(2+) serves as cofactor.

It localises to the cytoplasm. It carries out the reaction L-threonylcarbamoyladenylate + adenosine(37) in tRNA = N(6)-L-threonylcarbamoyladenosine(37) in tRNA + AMP + H(+). Functionally, required for the formation of a threonylcarbamoyl group on adenosine at position 37 (t(6)A37) in tRNAs that read codons beginning with adenine. Is involved in the transfer of the threonylcarbamoyl moiety of threonylcarbamoyl-AMP (TC-AMP) to the N6 group of A37, together with TsaE and TsaB. TsaD likely plays a direct catalytic role in this reaction. The protein is tRNA N6-adenosine threonylcarbamoyltransferase of Shewanella oneidensis (strain ATCC 700550 / JCM 31522 / CIP 106686 / LMG 19005 / NCIMB 14063 / MR-1).